Here is a 489-residue protein sequence, read N- to C-terminus: N-succinylglutamate 5-semialdehyde dehydrogenase 1 (489 aa).

223–228 serves as a coordination point for NAD(+); sequence GSSRTG. Residues Glu246 and Cys280 contribute to the active site.

This sequence belongs to the aldehyde dehydrogenase family. AstD subfamily.

It carries out the reaction N-succinyl-L-glutamate 5-semialdehyde + NAD(+) + H2O = N-succinyl-L-glutamate + NADH + 2 H(+). Its pathway is amino-acid degradation; L-arginine degradation via AST pathway; L-glutamate and succinate from L-arginine: step 4/5. Functionally, catalyzes the NAD-dependent reduction of succinylglutamate semialdehyde into succinylglutamate. The protein is N-succinylglutamate 5-semialdehyde dehydrogenase 1 of Pseudoalteromonas translucida (strain TAC 125).